A 315-amino-acid chain; its full sequence is DNA-directed RNA polymerase subunit alpha (315 aa).

The segment at 1-229 (MLDSKLKAPV…EHLTYFSNPQ (229 aa)) is alpha N-terminal domain (alpha-NTD). Positions 247-315 (EQEEELDLPL…LEKKGFTLKE (69 aa)) are alpha C-terminal domain (alpha-CTD).

The protein belongs to the RNA polymerase alpha chain family. As to quaternary structure, homodimer. The RNAP catalytic core consists of 2 alpha, 1 beta, 1 beta' and 1 omega subunit. When a sigma factor is associated with the core the holoenzyme is formed, which can initiate transcription.

It carries out the reaction RNA(n) + a ribonucleoside 5'-triphosphate = RNA(n+1) + diphosphate. In terms of biological role, DNA-dependent RNA polymerase catalyzes the transcription of DNA into RNA using the four ribonucleoside triphosphates as substrates. The chain is DNA-directed RNA polymerase subunit alpha from Thermus thermophilus (strain ATCC BAA-163 / DSM 7039 / HB27).